The following is a 621-amino-acid chain: 1-deoxy-D-xylulose-5-phosphate synthase (621 aa).

Residues His80 and Gly121 to Ser123 each bind thiamine diphosphate. Residue Asp152 coordinates Mg(2+). Thiamine diphosphate-binding positions include Gly153–Ala154, Asn181, Tyr288, and Glu370. Residue Asn181 coordinates Mg(2+).

This sequence belongs to the transketolase family. DXPS subfamily. Homodimer. Requires Mg(2+) as cofactor. It depends on thiamine diphosphate as a cofactor.

It catalyses the reaction D-glyceraldehyde 3-phosphate + pyruvate + H(+) = 1-deoxy-D-xylulose 5-phosphate + CO2. It functions in the pathway metabolic intermediate biosynthesis; 1-deoxy-D-xylulose 5-phosphate biosynthesis; 1-deoxy-D-xylulose 5-phosphate from D-glyceraldehyde 3-phosphate and pyruvate: step 1/1. Catalyzes the acyloin condensation reaction between C atoms 2 and 3 of pyruvate and glyceraldehyde 3-phosphate to yield 1-deoxy-D-xylulose-5-phosphate (DXP). This chain is 1-deoxy-D-xylulose-5-phosphate synthase, found in Shewanella frigidimarina (strain NCIMB 400).